A 102-amino-acid chain; its full sequence is Small ribosomal subunit protein uS10 (102 aa).

Belongs to the universal ribosomal protein uS10 family. In terms of assembly, part of the 30S ribosomal subunit.

Functionally, involved in the binding of tRNA to the ribosomes. This chain is Small ribosomal subunit protein uS10, found in Frankia alni (strain DSM 45986 / CECT 9034 / ACN14a).